We begin with the raw amino-acid sequence, 156 residues long: Transcription antitermination protein NusB (156 aa).

The protein belongs to the NusB family.

Its function is as follows. Involved in transcription antitermination. Required for transcription of ribosomal RNA (rRNA) genes. Binds specifically to the boxA antiterminator sequence of the ribosomal RNA (rrn) operons. In Vibrio cholerae serotype O1 (strain ATCC 39541 / Classical Ogawa 395 / O395), this protein is Transcription antitermination protein NusB.